The sequence spans 445 residues: Probable D-serine dehydratase (445 aa).

Lysine 111 bears the N6-(pyridoxal phosphate)lysine mark.

This sequence belongs to the serine/threonine dehydratase family. DsdA subfamily. Requires pyridoxal 5'-phosphate as cofactor.

The enzyme catalyses D-serine = pyruvate + NH4(+). In Burkholderia pseudomallei (strain K96243), this protein is Probable D-serine dehydratase.